Consider the following 359-residue polypeptide: 4-hydroxy-3-methylbut-2-en-1-yl diphosphate synthase (flavodoxin) (359 aa).

[4Fe-4S] cluster contacts are provided by cysteine 263, cysteine 266, cysteine 298, and glutamate 305.

The protein belongs to the IspG family. The cofactor is [4Fe-4S] cluster.

It catalyses the reaction (2E)-4-hydroxy-3-methylbut-2-enyl diphosphate + oxidized [flavodoxin] + H2O + 2 H(+) = 2-C-methyl-D-erythritol 2,4-cyclic diphosphate + reduced [flavodoxin]. It participates in isoprenoid biosynthesis; isopentenyl diphosphate biosynthesis via DXP pathway; isopentenyl diphosphate from 1-deoxy-D-xylulose 5-phosphate: step 5/6. Converts 2C-methyl-D-erythritol 2,4-cyclodiphosphate (ME-2,4cPP) into 1-hydroxy-2-methyl-2-(E)-butenyl 4-diphosphate. This is 4-hydroxy-3-methylbut-2-en-1-yl diphosphate synthase (flavodoxin) from Wolinella succinogenes (strain ATCC 29543 / DSM 1740 / CCUG 13145 / JCM 31913 / LMG 7466 / NCTC 11488 / FDC 602W) (Vibrio succinogenes).